A 69-amino-acid polypeptide reads, in one-letter code: Calcium-binding protein (69 aa).

2 consecutive EF-hand domains span residues 2 to 37 (VNRT…VNCP) and 38 to 69 (FKKE…VLCS). Ca(2+) is bound by residues Asp-15, Asp-17, Ser-19, Lys-21, Glu-26, Asp-51, Asp-53, Asp-55, Gln-57, and Glu-62.

This Schistosoma mansoni (Blood fluke) protein is Calcium-binding protein.